A 276-amino-acid polypeptide reads, in one-letter code: O-methyltransferase cnsE (276 aa).

S-adenosyl-L-methionine is bound by residues glutamine 110, 133–134 (DA), and histidine 155.

Belongs to the methyltransferase superfamily. Requires S-adenosyl-L-methionine as cofactor.

Its pathway is alkaloid biosynthesis. O-methyltransferase; part of the gene cluster that mediates the biosynthesis of communesins, a prominent class of indole alkaloids with great potential as pharmaceuticals. Communesins are biosynthesized by the coupling of tryptamine and aurantioclavine, two building blocks derived from L-tryptophan. The L-tryptophan decarboxylase cnsB converts L-tryptophan to tryptamine, whereas the tryptophan dimethylallyltransferase cnsF converts L-tryptophan to 4-dimethylallyl tryptophan which is further transformed to aurantioclavine by the aurantioclavine synthase cnsA, probably aided by the catalase cnsD. The cytochrome P450 monooxygenase cnsC catalyzes the heterodimeric coupling between the two different indole moieties, tryptamine and aurantioclavine, to construct vicinal quaternary stereocenters and yield the heptacyclic communesin scaffold. The O-methyltransferase cnsE then methylates the communesin scaffold to produce communesin K, the simplest characterized communesin that contains the heptacyclic core. The dioxygenase cnsJ converts communesin K into communesin I. Acylation to introduce the hexadienyl group at position N16 of communesin I by the acyltransferase cnsK leads to the production of communesin B. The hexadienyl group is produced by the highly reducing polyketide synthase cnsI, before being hydrolytically removed from cnsI by the serine hydrolase cnsH, converted into hexadienyl-CoA by the CoA ligase cnsG, and then transferred to communesin I by cnsK. Surprisingly, cnsK may also be a promiscuous acyltransferase that can tolerate a range of acyl groups, including acetyl-, propionyl-, and butyryl-CoA, which lead to communesins A, G and H respectively. The roles of the alpha-ketoglutarate-dependent dioxygenases cnsM and cnsP have still to be determined. The protein is O-methyltransferase cnsE of Penicillium expansum (Blue mold rot fungus).